The chain runs to 231 residues: LexA repressor (231 aa).

Residues 26-46 constitute a DNA-binding region (H-T-H motif); that stretch reads FDEMKLALDLRSKSGIHRLIT. Residues 79 to 98 form a disordered region; sequence VGFQPRVIDGDRPDRPRPAN. Basic and acidic residues predominate over residues 86–95; sequence IDGDRPDRPR. Active-site for autocatalytic cleavage activity residues include Ser152 and Lys190.

This sequence belongs to the peptidase S24 family. Homodimer.

It catalyses the reaction Hydrolysis of Ala-|-Gly bond in repressor LexA.. Represses a number of genes involved in the response to DNA damage (SOS response), including recA and lexA. In the presence of single-stranded DNA, RecA interacts with LexA causing an autocatalytic cleavage which disrupts the DNA-binding part of LexA, leading to derepression of the SOS regulon and eventually DNA repair. The sequence is that of LexA repressor from Ruegeria pomeroyi (strain ATCC 700808 / DSM 15171 / DSS-3) (Silicibacter pomeroyi).